The sequence spans 195 residues: MASSLDALKARVESLLGDHLESATIDRGELTIVCSASSIAVSCQLLRDQAGFDQCIDLCGMDYSTYRDGLHDRPRFAVVLHLMSVQNNQRLRVRFFAPDDDFPVVPSLIDVWASVNWYEREAFDMYGIVFEGHPDLRRILTDYGFVGHPFRKDFPVSGHVEMRYDPTEGRVIYQPVTIEPREITPRIIREENYGG.

This sequence belongs to the complex I 30 kDa subunit family. In terms of assembly, NDH-1 is composed of 14 different subunits. Subunits NuoB, C, D, E, F, and G constitute the peripheral sector of the complex.

The protein localises to the cell inner membrane. The catalysed reaction is a quinone + NADH + 5 H(+)(in) = a quinol + NAD(+) + 4 H(+)(out). Its function is as follows. NDH-1 shuttles electrons from NADH, via FMN and iron-sulfur (Fe-S) centers, to quinones in the respiratory chain. The immediate electron acceptor for the enzyme in this species is believed to be ubiquinone. Couples the redox reaction to proton translocation (for every two electrons transferred, four hydrogen ions are translocated across the cytoplasmic membrane), and thus conserves the redox energy in a proton gradient. The chain is NADH-quinone oxidoreductase subunit C from Laribacter hongkongensis (strain HLHK9).